Reading from the N-terminus, the 350-residue chain is Olfactory receptor 52I2 (350 aa).

The Extracellular segment spans residues 1-55 (MCQQILRDCILLIHHLCINRKKVSLVMLGPAYNHTMETPASFLLVGIPGLQSSHL). An N-linked (GlcNAc...) asparagine glycan is attached at Asn33. Residues 56–76 (WLAISLSAMYIIALLGNTIIV) form a helical membrane-spanning segment. Over 77–84 (TAIWMDST) the chain is Cytoplasmic. Residues 85 to 105 (RHEPMYCFLCVLAAVDIVMAS) traverse the membrane as a helical segment. Residues 106-129 (SVVPKMVSIFCSGDSSISFSACFT) lie on the Extracellular side of the membrane. Residues Cys127 and Cys219 are joined by a disulfide bond. The helical transmembrane segment at 130–150 (QMFFVHLATAVETGLLLTMAF) threads the bilayer. Topologically, residues 151–169 (DRYVAICKPLHYKRILTPQ) are cytoplasmic. Residues 170-190 (VMLGMSMAITIRAIIAITPLS) form a helical membrane-spanning segment. Topologically, residues 191-226 (WMVSHLPFCGSNVVVHSYCEHIALARLACADPVPSS) are extracellular. Residues 227–247 (LYSLIGSSLMVGSDVAFIAAS) traverse the membrane as a helical segment. Topologically, residues 248 to 267 (YILILKAVFGLSSKTAQLKA) are cytoplasmic. The chain crosses the membrane as a helical span at residues 268–288 (LSTCGSHVGVMALYYLPGMAS). Topologically, residues 289 to 304 (IYAAWLGQDVVPLHTQ) are extracellular. The helical transmembrane segment at 305–325 (VLLADLYVIIPATLNPIIYGM) threads the bilayer. At 326–350 (RTKQLRERIWSYLMHVLFDHSNLGS) the chain is on the cytoplasmic side.

The protein belongs to the G-protein coupled receptor 1 family.

It is found in the cell membrane. In terms of biological role, odorant receptor. In Homo sapiens (Human), this protein is Olfactory receptor 52I2 (OR52I2).